The following is a 588-amino-acid chain: Dual specificity tyrosine-phosphorylation-regulated kinase 3 (588 aa).

The disordered stretch occupies residues 1 to 188; the sequence is MGGTARGPGR…HGVIGGPNNG (188 aa). Residues 97–134 show a composition bias toward polar residues; it reads SNTIQSDGISDSEKCSPTVSQGKSSDCLNTVKSNSSSK. The Protein kinase domain maps to 209-522; sequence YEVLKIIGKG…PAQALRHPWI (314 aa). Residues 215–223, Lys238, and 288–291 contribute to the ATP site; these read IGKGSFGQV and FELL. Asp335 serves as the catalytic Proton acceptor. The residue at position 350 (Ser350) is a Phosphoserine. Phosphotyrosine is present on Tyr369. The Nuclear localization signal signature appears at 468-481; that stretch reads RSRRGKKRGPPGSK.

This sequence belongs to the protein kinase superfamily. CMGC Ser/Thr protein kinase family. MNB/DYRK subfamily. In terms of assembly, interacts with SIRT1. Requires Mg(2+) as cofactor. Post-translationally, ubiquitinated at anaphase by the anaphase-promoting complex (APC/C), leading to its degradation by the proteasome. In terms of processing, protein kinase activity is activated following autophosphorylation at Tyr-369. Autophosphorylation at Ser-350 stabilizes the protein and enhances the protein kinase activity. Isoform 1: Highly expressed in testis and in hematopoietic tissue such as fetal liver, and bone marrow. Isoform 1: Predominant form in fetal liver and bone marrow. Isoform 1: Present at low levels in heart, pancreas, lymph node and thymus. Isoform 2: Highly expressed in testis and in hematopoietic tissue such as fetal liver, and bone marrow. Isoform 2: Predominant form in testis. Isoform 2: Present at low levels in heart, pancreas, lymph node and thymus.

The protein localises to the nucleus. Its subcellular location is the cytoplasm. It localises to the nucleus speckle. It is found in the cytoplasmic granule. The protein resides in the cytoskeleton. The protein localises to the microtubule organizing center. Its subcellular location is the centrosome. The enzyme catalyses L-seryl-[protein] + ATP = O-phospho-L-seryl-[protein] + ADP + H(+). It carries out the reaction L-threonyl-[protein] + ATP = O-phospho-L-threonyl-[protein] + ADP + H(+). The catalysed reaction is L-tyrosyl-[protein] + ATP = O-phospho-L-tyrosyl-[protein] + ADP + H(+). With respect to regulation, protein kinase activity is activated following autophosphorylation at Tyr-369. Inhibited by harmine, an ATP competitive inhibitor. Inhibited by small-compound GSK-626616. Dual-specificity protein kinase that promotes disassembly of several types of membraneless organelles during mitosis, such as stress granules, nuclear speckles and pericentriolar material. Dual-specificity tyrosine-regulated kinases (DYRKs) autophosphorylate a critical tyrosine residue in their activation loop and phosphorylate their substrate on serine and threonine residues. Acts as a central dissolvase of membraneless organelles during the G2-to-M transition, after the nuclear-envelope breakdown: acts by mediating phosphorylation of multiple serine and threonine residues in unstructured domains of proteins, such as SRRM1 and PCM1. Does not mediate disassembly of all membraneless organelles: disassembly of P-body and nucleolus is not regulated by DYRK3. Dissolution of membraneless organelles at the onset of mitosis is also required to release mitotic regulators, such as ZNF207, from liquid-unmixed organelles where they are sequestered and keep them dissolved during mitosis. Regulates mTORC1 by mediating the dissolution of stress granules: during stressful conditions, DYRK3 partitions from the cytosol to the stress granule, together with mTORC1 components, which prevents mTORC1 signaling. When stress signals are gone, the kinase activity of DYRK3 is required for the dissolution of stress granule and mTORC1 relocation to the cytosol: acts by mediating the phosphorylation of the mTORC1 inhibitor AKT1S1, allowing full reactivation of mTORC1 signaling. Also acts as a negative regulator of EPO-dependent erythropoiesis: may place an upper limit on red cell production during stress erythropoiesis. Inhibits cell death due to cytokine withdrawal in hematopoietic progenitor cells. Promotes cell survival upon genotoxic stress through phosphorylation of SIRT1: this in turn inhibits p53/TP53 activity and apoptosis. The protein is Dual specificity tyrosine-phosphorylation-regulated kinase 3 of Homo sapiens (Human).